The sequence spans 73 residues: Putative antitoxin VapB18 (73 aa).

This sequence belongs to the UPF0330 family.

In terms of biological role, possibly the antitoxin component of a type II toxin-antitoxin (TA) system. Its cognate toxin is VapC18 (Potential). In Archaeoglobus fulgidus (strain ATCC 49558 / DSM 4304 / JCM 9628 / NBRC 100126 / VC-16), this protein is Putative antitoxin VapB18 (vapB18).